The chain runs to 308 residues: Inosose dehydratase (308 aa).

Belongs to the IolE/MocC family. The cofactor is glutathione. Co(2+) serves as cofactor. Requires Mn(2+) as cofactor.

It catalyses the reaction scyllo-inosose = 3D-3,5/4-trihydroxycyclohexane-1,2-dione + H2O. The protein operates within polyol metabolism; myo-inositol degradation into acetyl-CoA; acetyl-CoA from myo-inositol: step 2/7. Functionally, catalyzes the dehydration of inosose (2-keto-myo-inositol, 2KMI or 2,4,6/3,5-pentahydroxycyclohexanone) to 3D-(3,5/4)-trihydroxycyclohexane-1,2-dione (D-2,3-diketo-4-deoxy-epi-inositol). The sequence is that of Inosose dehydratase from Geobacillus kaustophilus (strain HTA426).